The following is a 406-amino-acid chain: Cysteine desulfurase (406 aa).

Residue Lys-226 is modified to N6-(pyridoxal phosphate)lysine. The Cysteine persulfide intermediate role is filled by Cys-364.

It belongs to the class-V pyridoxal-phosphate-dependent aminotransferase family. Csd subfamily. As to quaternary structure, homodimer. Interacts with SufE and the SufBCD complex composed of SufB, SufC and SufD. The interaction with SufE is required to mediate the direct transfer of the sulfur atom from the S-sulfanylcysteine. It depends on pyridoxal 5'-phosphate as a cofactor.

It is found in the cytoplasm. The catalysed reaction is (sulfur carrier)-H + L-cysteine = (sulfur carrier)-SH + L-alanine. The enzyme catalyses L-selenocysteine + AH2 = hydrogenselenide + L-alanine + A + H(+). The protein operates within cofactor biosynthesis; iron-sulfur cluster biosynthesis. Its function is as follows. Cysteine desulfurases mobilize the sulfur from L-cysteine to yield L-alanine, an essential step in sulfur metabolism for biosynthesis of a variety of sulfur-containing biomolecules. Component of the suf operon, which is activated and required under specific conditions such as oxidative stress and iron limitation. Acts as a potent selenocysteine lyase in vitro, that mobilizes selenium from L-selenocysteine. Selenocysteine lyase activity is however unsure in vivo. This chain is Cysteine desulfurase, found in Escherichia coli (strain SE11).